Reading from the N-terminus, the 1016-residue chain is DENN domain-containing protein 1A (1016 aa).

One can recognise a uDENN domain in the interval 13–145 (FEVYVEVAYP…HRLPIPDPGV (133 aa)). In terms of domain architecture, cDENN spans 162 to 298 (ELPSIPENRN…VISSLKNRLK (137 aa)). The region spanning 300–378 (VSTTTGDGVA…DGRLDLLNSG (79 aa)) is the dDENN domain. The FXDXF motif motif lies at 381–385 (FSDVF). The tract at residues 453 to 565 (DITENGCVSS…GPTPAPPDRA (113 aa)) is disordered. Residue Ser-473 is modified to Phosphoserine. Residues 479-489 (QDPRLREDRRP) show a composition bias toward basic and acidic residues. Positions 500 to 509 (PRPHVVRRPK) are enriched in basic residues. Phosphothreonine is present on Thr-519. Residues Ser-520, Ser-522, Ser-523, Ser-536, Ser-538, and Ser-546 each carry the phosphoserine modification. The Clathrin box motif lies at 569 to 578 (DLLEDVFSSL). Ser-592 is modified (phosphoserine). The tract at residues 681 to 737 (LSPSIKEETPIPTPGSITIPRPQGRKTPELGIVPPPPTARPAKLQAAGGPLGDFSSE) is disordered. Phosphoserine is present on Ser-750. Position 760 is an omega-N-methylarginine (Arg-760). 2 disordered regions span residues 763 to 783 (PQGPTELLQPPSPAPGAAGTG) and 935 to 1016 (SARA…ETFE). Over residues 954–970 (LLPPRPPQSLQPTPQPS) the composition is skewed to pro residues. Basic and acidic residues-rich tracts occupy residues 977–988 (DPFEDLLRKTKQ) and 1007–1016 (QLRRQWETFE).

As to quaternary structure, interacts with RAB35. Interacts with clathrin and with the adapter protein complex 2, AP-2. Interacts with ITSN1 and SH3GL2. Interacts (when phosphorylated) with YWHAE. Post-translationally, phosphorylated on serine and/or threonine in an Akt-dependent manner. Phosphorylation probably regulates the guanine nucleotide exchange factor (GEF) activity, possibly by disrupting an intramolecular interaction between the DENN domain and the C-terminus of the protein, thereby relieving the autoinhibition.

Its subcellular location is the cytoplasmic vesicle. The protein resides in the clathrin-coated vesicle membrane. It is found in the presynaptic cell membrane. The guanine nucleotide exchange factor (GEF) activity is autoinhibited. Autoinhibition may be the result of intramolecular interaction between the DENN domain and the C-terminus, which is disrupted upon phosphorylation. Activation is regulated by Akt activation. Its function is as follows. Guanine nucleotide exchange factor (GEF) regulating clathrin-mediated endocytosis through RAB35 activation. Promotes the exchange of GDP to GTP, converting inactive GDP-bound RAB35 into its active GTP-bound form. Regulates clathrin-mediated endocytosis of synaptic vesicles and mediates exit from early endosomes. Binds phosphatidylinositol-phosphates (PtdInsPs), with some preference for PtdIns(3)P. The polypeptide is DENN domain-containing protein 1A (Dennd1a) (Mus musculus (Mouse)).